Reading from the N-terminus, the 348-residue chain is Erythronate-4-phosphate dehydrogenase (348 aa).

Substrate contacts are provided by T46 and T67. D147 is an NAD(+) binding site. R209 is an active-site residue. D233 is a binding site for NAD(+). Residue E238 is part of the active site. H255 acts as the Proton donor in catalysis. G258 lines the NAD(+) pocket. Y259 contacts substrate.

Belongs to the D-isomer specific 2-hydroxyacid dehydrogenase family. PdxB subfamily. As to quaternary structure, homodimer.

Its subcellular location is the cytoplasm. It catalyses the reaction 4-phospho-D-erythronate + NAD(+) = (R)-3-hydroxy-2-oxo-4-phosphooxybutanoate + NADH + H(+). It functions in the pathway cofactor biosynthesis; pyridoxine 5'-phosphate biosynthesis; pyridoxine 5'-phosphate from D-erythrose 4-phosphate: step 2/5. Its function is as follows. Catalyzes the oxidation of erythronate-4-phosphate to 3-hydroxy-2-oxo-4-phosphonooxybutanoate. This chain is Erythronate-4-phosphate dehydrogenase, found in Bacteroides fragilis (strain YCH46).